The primary structure comprises 539 residues: M protein, serotype 24 (539 aa).

The N-terminal stretch at 1–42 (MTKNNTNRHYSLRKLKTGTASVAVALTVLGAGLVVNTNEVSA) is a signal peptide. An A-1 repeat occupies 118 to 152 (LEARKADLEKALEGAMNFSTADSAKIKTLEAEKAA). Residues 118-301 (LEARKADLEK…ALEAEKADLE (184 aa)) are 5.3 X 35 AA tandem repeats, A-type. Residues 153-187 (LAARKADLEKALEGAMNFSTADSAKIKTLEAEKAA) form an A-2 repeat. Residues 188 to 222 (LEARQAELEKALEGAMNFSTADSAKIKTLEAEKAA) form an A-3 repeat. An A-4 repeat occupies 223 to 257 (LAARKADLEKALEGAMNFSTADSAKIKTLEAEKAA). The A-5 repeat unit spans residues 258–292 (LEARQAELEKALEGAMNFSTADSAKIKTLEAEKAA). The stretch at 293–297 (LEAEK) is one A-6; truncated repeat. The tract at residues 297–401 (KADLEHQSQV…REAKKQVEKA (105 aa)) is disordered. 3 C repeats span residues 298-332 (ADLE…EAEH), 333-367 (QKLE…EAEH), and 368-402 (QKLE…EKAL). Over residues 303-312 (QSQVLNANRQ) the composition is skewed to polar residues. Composition is skewed to basic and acidic residues over residues 314-340 (LRRD…EQNK), 349-375 (LRRD…EQNK), and 384-401 (LRRD…VEKA). D repeat units lie at residues 435–440 (AKLEAE), 441–446 (AKALKE), 449–454 (AKQAEE), and 456–461 (AKLRAG). The interval 456 to 511 (AKLRAGKASDSQTPDAKPGNKAVPGKGQAPQAGTKPNQNKAPMKETKRQLPSTGET) is disordered. An LPXTG sorting signal motif is present at residues 505–509 (LPSTG). T508 bears the Pentaglycyl murein peptidoglycan amidated threonine mark. The propeptide at 509–539 (GETANPFFTAAALTVMATAGVAAVVKRKEEN) is removed by sortase.

This sequence belongs to the M protein family.

It is found in the secreted. Its subcellular location is the cell wall. Its function is as follows. This protein is one of the different antigenic serotypes of protein M. Protein M is closely associated with virulence of the bacterium and can render the organism resistant to phagocytosis. This is M protein, serotype 24 (emm24) from Streptococcus pyogenes.